An 83-amino-acid polypeptide reads, in one-letter code: Mitochondrial import inner membrane translocase subunit Tim8 B (83 aa).

An N-acetylalanine modification is found at Ala-2. A Twin CX3C motif motif is present at residues 36–59; the sequence is CWDKCVEKPGNRLDSRTENCLSSC. Intrachain disulfides connect Cys-36/Cys-59 and Cys-40/Cys-55.

Belongs to the small Tim family. As to quaternary structure, heterohexamer; possibly composed of 3 copies of TIMM8B and 3 copies of TIMM13, named soluble 70 kDa complex. Associates with the TIM22 complex, whose core is composed of TIMM22. Ubiquitous, with highest expression in heart, kidney, liver and skeletal muscle.

The protein localises to the mitochondrion inner membrane. Its function is as follows. Probable mitochondrial intermembrane chaperone that participates in the import and insertion of some multi-pass transmembrane proteins into the mitochondrial inner membrane. Also required for the transfer of beta-barrel precursors from the TOM complex to the sorting and assembly machinery (SAM complex) of the outer membrane. Acts as a chaperone-like protein that protects the hydrophobic precursors from aggregation and guide them through the mitochondrial intermembrane space. This is Mitochondrial import inner membrane translocase subunit Tim8 B (TIMM8B) from Homo sapiens (Human).